The sequence spans 817 residues: Kinesin-like protein 2 (817 aa).

Positions 1–155 (MEEEGHKSLT…YNDEKSVNAS (155 aa)) are disordered. Low complexity predominate over residues 8-23 (SLTSHLPQSSSSLSQS). A compositionally biased stretch (polar residues) spans 39–60 (IKTNSSSSNILKPRLSLQNEVN). The span at 76–86 (SLASVKSSSLA) shows a compositional bias: low complexity. Polar residues predominate over residues 106–116 (PISSRSVSASS). Low complexity predominate over residues 122-132 (ASAVSSSLNSS). Residues 155 to 242 (SALRTTEDRL…VSQKGMESLE (88 aa)) are a coiled coil. ATP-binding residues include Asn473, Arg475, Arg479, Glu543, Gly566, Ser567, Gly568, Lys569, Thr570, and Thr778. Residues 473–807 (NIRVFCRVRP…LRFATKVNNT (335 aa)) form the Kinesin motor domain.

This sequence belongs to the TRAFAC class myosin-kinesin ATPase superfamily. Kinesin family. NCD subfamily.

The protein resides in the cytoplasm. The protein localises to the cytoskeleton. Its subcellular location is the spindle. It is found in the nucleus. It catalyses the reaction ATP + H2O = ADP + phosphate + H(+). The enzyme catalyses ATP + H2O + a kinesin associated with a microtubule at position (n) = ADP + phosphate + a kinesin associated with a microtubule at position (n-1, toward the minus end).. Minus end-directed microtubule (MT) motor that is involved in spindle microtubule shortening, kinetochore capture, and polarization of cytoplasmic microtubules. During mitosis, promotes spindle microtubule shortening by depolymerization. During metaphase, involved in the recapture of kinetochores displaced from the spindle and their transport towards the spindle pole body; promotes transport both by microtubule end-on pulling and by lateral sliding along the side of the microtubule. During interphase, required for the polarization of cytoplasmic microtubules where it orients the microtubule plus ends toward the cell ends and the minus ends toward the cell center. Required for karyogamy. The chain is Kinesin-like protein 2 from Schizosaccharomyces pombe (strain 972 / ATCC 24843) (Fission yeast).